Here is a 490-residue protein sequence, read N- to C-terminus: Bifunctional protein GlmU (490 aa).

The interval 1–241 (MSSPGDTAVL…SALVAGVNNR (241 aa)) is pyrophosphorylase. Residues 12-15 (LAAG), Lys26, Gln83, 88-89 (GT), 112-114 (SGD), Gly151, Glu166, Asn181, and Asn239 contribute to the UDP-N-acetyl-alpha-D-glucosamine site. Position 114 (Asp114) interacts with Mg(2+). Position 239 (Asn239) interacts with Mg(2+). The linker stretch occupies residues 242–262 (VQLAQLGAELNRRIVAAHQLA). The segment at 263-490 (GVTVVDPATT…AGGRPAGEAE (228 aa)) is N-acetyltransferase. Residues Arg344 and Lys362 each contribute to the UDP-N-acetyl-alpha-D-glucosamine site. The active-site Proton acceptor is His374. UDP-N-acetyl-alpha-D-glucosamine is bound by residues Tyr377 and Asn388. Acetyl-CoA-binding positions include Ala391, 397 to 398 (NY), Ser416, and Ala434. A disordered region spans residues 462-490 (RRKRPGSAAARAAEAAEKAAGGRPAGEAE). The span at 467–490 (GSAAARAAEAAEKAAGGRPAGEAE) shows a compositional bias: low complexity.

In the N-terminal section; belongs to the N-acetylglucosamine-1-phosphate uridyltransferase family. This sequence in the C-terminal section; belongs to the transferase hexapeptide repeat family. As to quaternary structure, homotrimer. Mg(2+) serves as cofactor.

It is found in the cytoplasm. It catalyses the reaction alpha-D-glucosamine 1-phosphate + acetyl-CoA = N-acetyl-alpha-D-glucosamine 1-phosphate + CoA + H(+). It carries out the reaction N-acetyl-alpha-D-glucosamine 1-phosphate + UTP + H(+) = UDP-N-acetyl-alpha-D-glucosamine + diphosphate. It functions in the pathway nucleotide-sugar biosynthesis; UDP-N-acetyl-alpha-D-glucosamine biosynthesis; N-acetyl-alpha-D-glucosamine 1-phosphate from alpha-D-glucosamine 6-phosphate (route II): step 2/2. It participates in nucleotide-sugar biosynthesis; UDP-N-acetyl-alpha-D-glucosamine biosynthesis; UDP-N-acetyl-alpha-D-glucosamine from N-acetyl-alpha-D-glucosamine 1-phosphate: step 1/1. The protein operates within bacterial outer membrane biogenesis; LPS lipid A biosynthesis. Its function is as follows. Catalyzes the last two sequential reactions in the de novo biosynthetic pathway for UDP-N-acetylglucosamine (UDP-GlcNAc). The C-terminal domain catalyzes the transfer of acetyl group from acetyl coenzyme A to glucosamine-1-phosphate (GlcN-1-P) to produce N-acetylglucosamine-1-phosphate (GlcNAc-1-P), which is converted into UDP-GlcNAc by the transfer of uridine 5-monophosphate (from uridine 5-triphosphate), a reaction catalyzed by the N-terminal domain. The polypeptide is Bifunctional protein GlmU (Mycolicibacterium paratuberculosis (strain ATCC BAA-968 / K-10) (Mycobacterium paratuberculosis)).